A 185-amino-acid polypeptide reads, in one-letter code: NEDD8-conjugating enzyme UBE2F (185 aa).

Methionine 1 bears the N-acetylmethionine mark. The tract at residues 1–29 (MLTLASKLKRDDGLKGSRTAATASDSTRR) is interaction with UBA3. Positions 32-185 (VRDKLLVKEV…VDDYIKRYAR (154 aa)) constitute a UBC core domain. Cysteine 116 (glycyl thioester intermediate) is an active-site residue.

Belongs to the ubiquitin-conjugating enzyme family. UBE2F subfamily. In terms of assembly, interacts with UBA3 and RBX2. Interacts (N-terminally acetylated form) with (via DCUN1 domain) DCUN1D1, DCUN1D2, DCUN1D3, DCUN1D4 and DCUN1D5. The acetylation of Met-1 increases affinity for DCUN1D3 by about 2 orders of magnitude and is crucial for NEDD8 transfer to cullins. In terms of tissue distribution, widely expressed (at protein level).

The enzyme catalyses [E1 NEDD8-activating enzyme]-S-[NEDD8 protein]-yl-L-cysteine + [E2 NEDD8-conjugating enzyme]-L-cysteine = [E1 NEDD8-activating enzyme]-L-cysteine + [E2 NEDD8-conjugating enzyme]-S-[NEDD8-protein]-yl-L-cysteine.. The protein operates within protein modification; protein neddylation. Accepts the ubiquitin-like protein NEDD8 from the UBA3-NAE1 E1 complex and catalyzes its covalent attachment to other proteins. Together with the E3 ubiquitin ligase RNF7/RBX2, specifically neddylates cullin-5 (CUL5). Does not neddylate CUL1, CUL2, CUL3, CUL4A or CUL4B. Mediates neddylation of the CUL9-RBX1 complex. Its function is as follows. (Microbial infection) Following infection by HIV-1 virus, participates to HIV-1 Vif protein-mediated ubiquitination and degradation of APOBEC3G by mediating neddylation of cullin-5 (CUL5). The polypeptide is NEDD8-conjugating enzyme UBE2F (UBE2F) (Homo sapiens (Human)).